Reading from the N-terminus, the 302-residue chain is MCLTRYDEKFFDCRKSQIIAYLDSQQVPVIPLFYNSYQSTAEIYRQIFIENKSKWKYSEPSFSDDDLLRKGIRPVRASFPDFSQASDCLKDLLARHKLVFVWGDEYCLPYRKEAFQAIHSTHSLVVTGYDGENKAYYVEDWDGLYGYLPAVHLEAAFDSLSRQMRTLLVLELNDEEMRENKQEDTDLFRKWLQAFEDDYIFYDRVLLDMRDYEENRLISMDHGLRLIAASRHVFSKFLHYIDDAPEEVGLLIRNHQLANHIAAIVRRYIIAKQIDWDGAACKIRQLREQEDDFMRKLKSRYG.

It catalyses the reaction 4-(gamma-L-glutamylamino)-(2S)-2-hydroxybutanoyl-[BtrI ACP] + ribostamycin = gamma-L-glutamyl-butirosin B + holo-[BtrI ACP] + H(+). It participates in antibiotic biosynthesis; butirosin biosynthesis. Its function is as follows. Aminoglycoside acyltransferase that attaches the (S)-4-amino-2-hydroxybutyrate (AHBA) side chain from the acyl carrier protein BtrI to the aminoglycoside ribostamycin in the biosynthetic pathway of butirosin. The AHBA side chain protects the antibiotic from several common resistance mechanisms. This is Ribostamycin:4-(gamma-L-glutamylamino)-(S)-2-hydroxybutanoyl-[BtrI acyl-carrier protein] 4-(gamma-L-glutamylamino)-(S)-2-hydroxybutanoate transferase (btrH) from Niallia circulans (Bacillus circulans).